Reading from the N-terminus, the 216-residue chain is Heart- and neural crest derivatives-expressed protein 1 (216 aa).

3 disordered regions span residues 1 to 20 (MNLV…HPPH), 53 to 109 (APDF…RTES), and 165 to 203 (ELKK…KGRT). A compositionally biased stretch (basic residues) spans 8-18 (AHHHHHHHSHP). Low complexity predominate over residues 65–78 (TAVAAAAYGPDARP). Positions 92–104 (LPKRKGSGPKKER) are enriched in basic residues. The bHLH domain occupies 94–146 (KRKGSGPKKERRRTESINSAFAELRECIPNVPADTKLSKIKTLRLATSYIAYL). A Phosphothreonine; by PLK4 modification is found at T107. At S109 the chain carries Phosphoserine; by PLK4. Over residues 165-174 (ELKKTDGGRE) the composition is skewed to basic and acidic residues.

Efficient DNA binding requires dimerization with another bHLH protein. Forms homodimers and heterodimers with TCF3 gene products E12 and E47, HAND2 and HEY1, HEY2 and HEYL (hairy-related transcription factors). Interacts with MDFIC. Interacts with SOX15; the interaction enhances HAND1-induced differentiation of trophoblast giant cells. Phosphorylation by PLK4 disrupts the interaction with MDFIC and leads to translocation into the nucleoplasm, allowing dimerization and transcription factor activity. Smooth muscle cells of the gut and adrenal tissue.

Its subcellular location is the nucleus. The protein localises to the nucleoplasm. The protein resides in the nucleolus. Its function is as follows. Transcription factor that plays an essential role in both trophoblast giant cell differentiation and in cardiac morphogenesis. Binds the DNA sequence 5'-NRTCTG-3' (non-canonical E-box). Acts as a transcriptional repressor of SOX15. In the adult, could be required for ongoing expression of cardiac-specific genes. In Mus musculus (Mouse), this protein is Heart- and neural crest derivatives-expressed protein 1 (Hand1).